The sequence spans 314 residues: Olfactory receptor 51I1 (314 aa).

Residues 1–27 (MLGLNGTPFQPATLQLTGIPGIQTGLT) are Extracellular-facing. Residues 28 to 48 (WVALIFCILYMISIVGNLSIL) form a helical membrane-spanning segment. Residues 49–56 (TLVFWEPA) are Cytoplasmic-facing. Residues 57–77 (LHQPMYYFLSMLALNDLGVSF) traverse the membrane as a helical segment. Residues 78–101 (STLPTVISTFCFNYNHVAFNACLV) lie on the Extracellular side of the membrane. Residues Cys99 and Cys191 are joined by a disulfide bond. The helical transmembrane segment at 102–122 (QMFFIHTFSFMESGILLAMSL) threads the bilayer. Residues 123 to 141 (DRFVAICYPLRYVTVLTHN) lie on the Cytoplasmic side of the membrane. Residues 142 to 162 (RILAMGLGILTKSFTTLFPFP) form a helical membrane-spanning segment. The Extracellular portion of the chain corresponds to 163-198 (FVVKRLPFCKGNVLHHSYCLHPDLMKVACGDIHVNN). The chain crosses the membrane as a helical span at residues 199 to 219 (IYGLLVIIFTYGMDSTFILLS). Over 220–239 (YALILRAMLVIISQEQRLKA) the chain is Cytoplasmic. The chain crosses the membrane as a helical span at residues 240-260 (LNTCMSHICAVLAFYVPIIAV). Topologically, residues 261-275 (SMIHRFWKSAPPVVH) are extracellular. Residues 276–296 (VMMSNVYLFVPPMLNPIIYSV) traverse the membrane as a helical segment. Residues 297–314 (KTKEIRKGILKFFHKSQA) are Cytoplasmic-facing.

The protein belongs to the G-protein coupled receptor 1 family.

The protein resides in the cell membrane. Its function is as follows. Odorant receptor. The sequence is that of Olfactory receptor 51I1 (OR51I1) from Homo sapiens (Human).